Consider the following 139-residue polypeptide: D-ribose pyranase (139 aa).

The Proton donor role is filled by His20. Substrate contacts are provided by residues Asp28, His106, and 128 to 130; that span reads YAN.

Belongs to the RbsD / FucU family. RbsD subfamily. Homodecamer.

It localises to the cytoplasm. The catalysed reaction is beta-D-ribopyranose = beta-D-ribofuranose. The protein operates within carbohydrate metabolism; D-ribose degradation; D-ribose 5-phosphate from beta-D-ribopyranose: step 1/2. Catalyzes the interconversion of beta-pyran and beta-furan forms of D-ribose. The protein is D-ribose pyranase of Salmonella paratyphi B (strain ATCC BAA-1250 / SPB7).